A 469-amino-acid polypeptide reads, in one-letter code: Glutamate--tRNA ligase 1 (469 aa).

The 'HIGH' region signature appears at 11-21; the sequence is PSPTGHLHLGG. The 'KMSKS' region motif lies at 238–242; it reads KLSKR. Residue Lys241 coordinates ATP.

The protein belongs to the class-I aminoacyl-tRNA synthetase family. Glutamate--tRNA ligase type 1 subfamily. As to quaternary structure, monomer.

Its subcellular location is the cytoplasm. It carries out the reaction tRNA(Glu) + L-glutamate + ATP = L-glutamyl-tRNA(Glu) + AMP + diphosphate. Catalyzes the attachment of glutamate to tRNA(Glu) in a two-step reaction: glutamate is first activated by ATP to form Glu-AMP and then transferred to the acceptor end of tRNA(Glu). This is Glutamate--tRNA ligase 1 from Ehrlichia canis (strain Jake).